Here is a 357-residue protein sequence, read N- to C-terminus: MGICASSMEGEKTNTDINLSIEKERKKKHNEVKLLLLGAGESGKSTISKQMKIIHQSGYSNEERKEFKPIITRNILDNMRVLLDGMGRLGMTIDPSNSDAAVMIKELTSLQASIVTDCWGELNEDQGKKIKALWTDPGVKQAMRRANEFSTLPDSAPYFFDSIDRMTSPVYIPTDQDILHTRVMTRGVHETNFEIGKIKFRLVDVGGQRSERKKWLSCFDDVTAVVFCVALSEYDLLLYEDNSTNRMLESLRVFSDVCNSWFVNTPIILFLNKSDLFREKIKHVDLSETFPEYKGGRDYERASNYIKERFWQINKTEQKAIYSHITCATDTNNIRVVFEAVKDIIFTQCVMKAGLYS.

Gly-2 carries N-myristoyl glycine lipidation. Cys-4 carries S-palmitoyl cysteine lipidation. The 327-residue stretch at 30–356 (NEVKLLLLGA…TQCVMKAGLY (327 aa)) folds into the G-alpha domain. A G1 motif region spans residues 33–46 (KLLLLGAGESGKST). GTP contacts are provided by Glu-41, Ser-42, Gly-43, Lys-44, Ser-45, and Thr-46. Ser-45 contacts Mg(2+). Ser-113 is subject to Phosphoserine. Asp-154, Leu-179, Thr-185, Gly-207, Asn-272, Lys-273, Asp-275, and Ala-328 together coordinate GTP. Residues 177 to 185 (DILHTRVMT) are G2 motif. Residue Thr-185 participates in Mg(2+) binding. The G3 motif stretch occupies residues 200–209 (FRLVDVGGQR). Positions 268-275 (ILFLNKSD) are G4 motif. A G5 motif region spans residues 326-331 (TCATDT).

The protein belongs to the G-alpha family. G proteins are composed of 3 units; alpha, beta and gamma. The alpha chain contains the guanine nucleotide binding site. Interacts with the RAP guanine nucleotide exchange factor glfB. Requires Mg(2+) as cofactor. In terms of processing, ser-113 is transiently phosphorylated following stimulation with extracellular cAMP.

Its function is as follows. Guanine nucleotide-binding proteins (G proteins) are involved as modulators or transducers in various transmembrane signaling systems. G alpha-2 is required for the early aggregation process and most of the known cAMP receptor-mediated responses. Interacts with downstream effector gflB, a Rap guanine nucleotide exchange factor, to regulate the balance between Ras and Rap signaling at the leading edge of chemotaxing cells. The protein is Guanine nucleotide-binding protein alpha-2 subunit (gpaB) of Dictyostelium discoideum (Social amoeba).